Here is a 180-residue protein sequence, read N- to C-terminus: UPF0227 protein YcfP (180 aa).

The protein belongs to the UPF0227 family.

The sequence is that of UPF0227 protein YcfP from Salmonella paratyphi A (strain ATCC 9150 / SARB42).